The chain runs to 72 residues: Translation initiation factor IF-1 (72 aa).

Residues 1–72 (MAKEDSIEMQ…SKGRIVFRAR (72 aa)) enclose the S1-like domain.

It belongs to the IF-1 family. Component of the 30S ribosomal translation pre-initiation complex which assembles on the 30S ribosome in the order IF-2 and IF-3, IF-1 and N-formylmethionyl-tRNA(fMet); mRNA recruitment can occur at any time during PIC assembly.

The protein resides in the cytoplasm. Its function is as follows. One of the essential components for the initiation of protein synthesis. Stabilizes the binding of IF-2 and IF-3 on the 30S subunit to which N-formylmethionyl-tRNA(fMet) subsequently binds. Helps modulate mRNA selection, yielding the 30S pre-initiation complex (PIC). Upon addition of the 50S ribosomal subunit IF-1, IF-2 and IF-3 are released leaving the mature 70S translation initiation complex. This chain is Translation initiation factor IF-1, found in Psychromonas ingrahamii (strain DSM 17664 / CCUG 51855 / 37).